A 261-amino-acid polypeptide reads, in one-letter code: Glucose 1-dehydrogenase 1 (261 aa).

Val-11–Val-35 serves as a coordination point for NADP(+). Ser-145 lines the substrate pocket. Tyr-158 serves as the catalytic Proton acceptor.

Belongs to the short-chain dehydrogenases/reductases (SDR) family. As to quaternary structure, homotetramer.

The enzyme catalyses D-glucose + NAD(+) = D-glucono-1,5-lactone + NADH + H(+). The catalysed reaction is D-glucose + NADP(+) = D-glucono-1,5-lactone + NADPH + H(+). In terms of biological role, may play some role in spore germination. The polypeptide is Glucose 1-dehydrogenase 1 (gdhI) (Priestia megaterium (Bacillus megaterium)).